Reading from the N-terminus, the 354-residue chain is Uroporphyrinogen decarboxylase (354 aa).

Residues 28–32 (RQAGR), D78, Y155, S210, and H325 each bind substrate.

Belongs to the uroporphyrinogen decarboxylase family. In terms of assembly, homodimer.

It is found in the cytoplasm. It carries out the reaction uroporphyrinogen III + 4 H(+) = coproporphyrinogen III + 4 CO2. Its pathway is porphyrin-containing compound metabolism; protoporphyrin-IX biosynthesis; coproporphyrinogen-III from 5-aminolevulinate: step 4/4. Functionally, catalyzes the decarboxylation of four acetate groups of uroporphyrinogen-III to yield coproporphyrinogen-III. The sequence is that of Uroporphyrinogen decarboxylase from Crocosphaera subtropica (strain ATCC 51142 / BH68) (Cyanothece sp. (strain ATCC 51142)).